The following is a 490-amino-acid chain: Betaine aldehyde dehydrogenase (490 aa).

Residues Thr26, Ile27, and Asp93 each coordinate K(+). Residue 150–152 coordinates NAD(+); sequence GAW. Residue Lys162 is the Charge relay system of the active site. 176 to 179 provides a ligand contact to NAD(+); that stretch reads KPSE. Val180 provides a ligand contact to K(+). 230–233 provides a ligand contact to NAD(+); sequence GVAS. K(+) is bound at residue Leu246. The active-site Proton acceptor is Glu252. 3 residues coordinate NAD(+): Gly254, Cys286, and Glu387. The active-site Nucleophile is Cys286. Cys286 bears the Cysteine sulfenic acid (-SOH) mark. Residues Lys457 and Gly460 each contribute to the K(+) site. The active-site Charge relay system is the Glu464.

The protein belongs to the aldehyde dehydrogenase family. Dimer of dimers. K(+) serves as cofactor.

The enzyme catalyses betaine aldehyde + NAD(+) + H2O = glycine betaine + NADH + 2 H(+). It functions in the pathway amine and polyamine biosynthesis; betaine biosynthesis via choline pathway; betaine from betaine aldehyde: step 1/1. Functionally, involved in the biosynthesis of the osmoprotectant glycine betaine. Catalyzes the irreversible oxidation of betaine aldehyde to the corresponding acid. This Shigella flexneri serotype 5b (strain 8401) protein is Betaine aldehyde dehydrogenase.